Reading from the N-terminus, the 189-residue chain is Threonylcarbamoyl-AMP synthase (189 aa).

Residues 3 to 189 form the YrdC-like domain; it reads TTSVTEAAEC…NALTGEVIRP (187 aa).

This sequence belongs to the SUA5 family. TsaC subfamily.

It localises to the cytoplasm. The catalysed reaction is L-threonine + hydrogencarbonate + ATP = L-threonylcarbamoyladenylate + diphosphate + H2O. Its function is as follows. Required for the formation of a threonylcarbamoyl group on adenosine at position 37 (t(6)A37) in tRNAs that read codons beginning with adenine. Catalyzes the conversion of L-threonine, HCO(3)(-)/CO(2) and ATP to give threonylcarbamoyl-AMP (TC-AMP) as the acyladenylate intermediate, with the release of diphosphate. This is Threonylcarbamoyl-AMP synthase from Acinetobacter baumannii (strain ACICU).